The sequence spans 95 residues: Aspartyl/glutamyl-tRNA(Asn/Gln) amidotransferase subunit C (95 aa).

Belongs to the GatC family. As to quaternary structure, heterotrimer of A, B and C subunits.

The catalysed reaction is L-glutamyl-tRNA(Gln) + L-glutamine + ATP + H2O = L-glutaminyl-tRNA(Gln) + L-glutamate + ADP + phosphate + H(+). The enzyme catalyses L-aspartyl-tRNA(Asn) + L-glutamine + ATP + H2O = L-asparaginyl-tRNA(Asn) + L-glutamate + ADP + phosphate + 2 H(+). Allows the formation of correctly charged Asn-tRNA(Asn) or Gln-tRNA(Gln) through the transamidation of misacylated Asp-tRNA(Asn) or Glu-tRNA(Gln) in organisms which lack either or both of asparaginyl-tRNA or glutaminyl-tRNA synthetases. The reaction takes place in the presence of glutamine and ATP through an activated phospho-Asp-tRNA(Asn) or phospho-Glu-tRNA(Gln). The sequence is that of Aspartyl/glutamyl-tRNA(Asn/Gln) amidotransferase subunit C from Methylocella silvestris (strain DSM 15510 / CIP 108128 / LMG 27833 / NCIMB 13906 / BL2).